The sequence spans 267 residues: 4-hydroxy-tetrahydrodipicolinate reductase (267 aa).

Residues G8 to M13 and E34 each bind NAD(+). R35 is an NADP(+) binding site. Residues G98 to T100 and A122 to M125 contribute to the NAD(+) site. H155 functions as the Proton donor/acceptor in the catalytic mechanism. (S)-2,3,4,5-tetrahydrodipicolinate is bound at residue H156. K159 (proton donor) is an active-site residue. A (S)-2,3,4,5-tetrahydrodipicolinate-binding site is contributed by G165 to T166.

The protein belongs to the DapB family.

It is found in the cytoplasm. It carries out the reaction (S)-2,3,4,5-tetrahydrodipicolinate + NAD(+) + H2O = (2S,4S)-4-hydroxy-2,3,4,5-tetrahydrodipicolinate + NADH + H(+). The enzyme catalyses (S)-2,3,4,5-tetrahydrodipicolinate + NADP(+) + H2O = (2S,4S)-4-hydroxy-2,3,4,5-tetrahydrodipicolinate + NADPH + H(+). The protein operates within amino-acid biosynthesis; L-lysine biosynthesis via DAP pathway; (S)-tetrahydrodipicolinate from L-aspartate: step 4/4. Catalyzes the conversion of 4-hydroxy-tetrahydrodipicolinate (HTPA) to tetrahydrodipicolinate. This is 4-hydroxy-tetrahydrodipicolinate reductase from Geotalea uraniireducens (strain Rf4) (Geobacter uraniireducens).